The chain runs to 427 residues: MDPSVTLWQFLLQLLREQGNGHIISWTSRDGGEFKLVDAEEVARLWGLRKNKTNMNYDKLSRALRYYYDKNIIRKVSGQKFVYKFVSYPEVAGCSTEDCPPQPEVSVTSAVAMAPATVHSGPGDNATGKPGTPKGAGMTGQGGLARSSRNEYMRSGLYSTFTIQSLQPQPPLHPRPASVLPNTTPAGVPAPPSGSRSTSPNPLEACLEAEEAGLPLQVILTPPEAPNQKSEELSLNPGFGRPQPPEVKVEGPKEELEVTEVGGFSPEAVKAEQEVSPSEGLLARLPAILTENTAQVCGLSTSTTEITQPQKGRKPRDLELPLSPSLLGGQGPERTPGSGTSSGLQAQGPALTPSLLPTHTLTPVLLTPSSLPPSIHFWSTLSPIAPRSPAKLSFQFPSSGSAQVHIPSISVDGLSTPVVLSPGPQKP.

A DNA-binding region (ETS) is located at residues 5 to 86 (VTLWQFLLQL…SGQKFVYKFV (82 aa)). 3 disordered regions span residues 116 to 146 (ATVH…GLAR), 166 to 202 (LQPQ…SPNP), and 226 to 252 (PNQK…VEGP). Residues Lys-229, Lys-248, and Lys-253 each participate in a glycyl lysine isopeptide (Lys-Gly) (interchain with G-Cter in SUMO) cross-link. Residues 300 to 310 (STSTTEITQPQ) are compositionally biased toward polar residues. Residues 300-350 (STSTTEITQPQKGRKPRDLELPLSPSLLGGQGPERTPGSGTSSGLQAQGPA) form a disordered region. A Phosphoserine; by MAPK1 modification is found at Ser-323. Phosphothreonine; by MAPK1 occurs at positions 335, 352, 362, and 367. The sufficient for interaction with MAD2L2 stretch occupies residues 348–398 (GPALTPSLLPTHTLTPVLLTPSSLPPSIHFWSTLSPIAPRSPAKLSFQFPS). Thr-380 carries O-linked (GlcNAc) threonine glycosylation. Ser-382 is subject to Phosphoserine; by MAPK1 and MAPK8. Ser-388 is subject to Phosphoserine; by MAPK1. A Phosphothreonine; by MAPK1 modification is found at Thr-416. A Phosphoserine; by MAPK1 modification is found at Ser-421.

This sequence belongs to the ETS family. In terms of assembly, interacts in its sumoylated form with PIAS2/PIASX which enhances its transcriptional activator activity. Interacts with MAD2L2; the interaction is direct and promotes phosphorylation by the kinases MAPK8 and/or MAPK9. Interacts with POU1F1. In terms of processing, sumoylation represses transcriptional activator activity as it results in recruitment of HDAC2 to target gene promoters which leads to decreased histone acetylation and reduced transactivator activity. It also regulates nuclear retention. Post-translationally, on mitogenic stimulation, phosphorylated on C-terminal serine and threonine residues by MAPK1. Ser-382 and Ser-388 are the preferred sites for MAPK1. In vitro, phosphorylation by MAPK1 potentiates ternary complex formation with the serum responses factors, SRE and SRF. Also phosphorylated on Ser-382 by MAPK8 and/or MAKP9. Phosphorylation leads to loss of sumoylation and restores transcriptional activator activity. Phosphorylated and activated by CAMK4, MAPK11, MAPK12 and MAPK14. Upon bFGF stimulus, phosphorylated by PAK1. Phosphorylated by PRP4K at Thr-416; phosphorylation activation ELK1 transcriptional activity.

The protein resides in the nucleus. Functionally, transcription factor that binds to purine-rich DNA sequences. Forms a ternary complex with SRF and the ETS and SRF motifs of the serum response element (SRE) on the promoter region of immediate early genes such as FOS and IER2. Induces target gene transcription upon JNK and MAPK-signaling pathways stimulation. The polypeptide is ETS domain-containing protein Elk-1 (Rattus norvegicus (Rat)).